Consider the following 371-residue polypeptide: Bifunctional enzyme IspD/IspF (371 aa).

A 2-C-methyl-D-erythritol 4-phosphate cytidylyltransferase region spans residues 1–210 (MSEISLIMLA…LDLPTPSFEI (210 aa)). Residues 211-371 (FTGNGFDVHE…NLKYFDWTRL (161 aa)) are 2-C-methyl-D-erythritol 2,4-cyclodiphosphate synthase. Residues Asp217 and His219 each contribute to the a divalent metal cation site. Residues 217 to 219 (DVH) and 243 to 244 (HS) contribute to the 4-CDP-2-C-methyl-D-erythritol 2-phosphate site. Residue His251 coordinates a divalent metal cation. Residues 265 to 267 (DIG), 270 to 274 (YPDTD), 341 to 344 (TTTE), Phe348, and Arg351 contribute to the 4-CDP-2-C-methyl-D-erythritol 2-phosphate site.

The protein in the N-terminal section; belongs to the IspD/TarI cytidylyltransferase family. IspD subfamily. It in the C-terminal section; belongs to the IspF family. A divalent metal cation serves as cofactor.

The enzyme catalyses 2-C-methyl-D-erythritol 4-phosphate + CTP + H(+) = 4-CDP-2-C-methyl-D-erythritol + diphosphate. It catalyses the reaction 4-CDP-2-C-methyl-D-erythritol 2-phosphate = 2-C-methyl-D-erythritol 2,4-cyclic diphosphate + CMP. It participates in isoprenoid biosynthesis; isopentenyl diphosphate biosynthesis via DXP pathway; isopentenyl diphosphate from 1-deoxy-D-xylulose 5-phosphate: step 2/6. The protein operates within isoprenoid biosynthesis; isopentenyl diphosphate biosynthesis via DXP pathway; isopentenyl diphosphate from 1-deoxy-D-xylulose 5-phosphate: step 4/6. Bifunctional enzyme that catalyzes the formation of 4-diphosphocytidyl-2-C-methyl-D-erythritol from CTP and 2-C-methyl-D-erythritol 4-phosphate (MEP) (IspD), and catalyzes the conversion of 4-diphosphocytidyl-2-C-methyl-D-erythritol 2-phosphate (CDP-ME2P) to 2-C-methyl-D-erythritol 2,4-cyclodiphosphate (ME-CPP) with a corresponding release of cytidine 5-monophosphate (CMP) (IspF). This chain is Bifunctional enzyme IspD/IspF, found in Campylobacter jejuni subsp. jejuni serotype O:23/36 (strain 81-176).